We begin with the raw amino-acid sequence, 336 residues long: Sex determination protein tasselseed-2 (336 aa).

Residue 59–83 participates in NAD(+) binding; that stretch reads IVTGGARGIGEAIVRLFAKHGARVV. Ser-194 is a substrate binding site. The active-site Proton acceptor is Tyr-207.

Belongs to the short-chain dehydrogenases/reductases (SDR) family.

Functionally, required for stage-specific floral organ abortion. This is Sex determination protein tasselseed-2 (TS2) from Zea mays (Maize).